The sequence spans 336 residues: Fructose-1,6-bisphosphatase class 1 (336 aa).

Positions 92, 115, 117, and 118 each coordinate Mg(2+). Residues 118–121 (DGSS), asparagine 211, tyrosine 244, 262–264 (YLY), and lysine 274 each bind substrate. Glutamate 280 contributes to the Mg(2+) binding site.

This sequence belongs to the FBPase class 1 family. Homotetramer. Mg(2+) is required as a cofactor.

The protein localises to the cytoplasm. The enzyme catalyses beta-D-fructose 1,6-bisphosphate + H2O = beta-D-fructose 6-phosphate + phosphate. It functions in the pathway carbohydrate biosynthesis; gluconeogenesis. The sequence is that of Fructose-1,6-bisphosphatase class 1 from Vibrio cholerae serotype O1 (strain ATCC 39541 / Classical Ogawa 395 / O395).